Reading from the N-terminus, the 535-residue chain is Atrial natriuretic peptide receptor 3 (535 aa).

An N-terminal signal peptide occupies residues 1-26; sequence MRSLLLFTFSACVLLARALLAGGASS. Positions 27-40 are excised as a propeptide; it reads GGGDTGPGNRRRER. Residues 41-477 are Extracellular-facing; it reads EALAAQKIEV…CKSCGLEESA (437 aa). Residue asparagine 81 is glycosylated (N-linked (GlcNAc...) asparagine). 2 disulfide bridges follow: cysteine 103-cysteine 131 and cysteine 208-cysteine 256. 2 N-linked (GlcNAc...) asparagine glycosylation sites follow: asparagine 288 and asparagine 389. A helical transmembrane segment spans residues 478–498; that stretch reads VTGIVVGALLGAGLLMAFYFF. The Cytoplasmic portion of the chain corresponds to 499–535; sequence RKKYRITIERRNHQEESNIGKHRELREDSIRSHFSVA.

This sequence belongs to the ANF receptor family. As to quaternary structure, homodimer; disulfide-linked. Interacts with OSTN.

It localises to the cell membrane. In terms of biological role, receptor for the natriuretic peptide hormones, binding with similar affinities atrial natriuretic peptide NPPA/ANP, brain natriuretic peptide NPPB/BNP, and C-type natriuretic peptide NPPC/CNP. May function as a clearance receptor for NPPA, NPPB and NPPC, regulating their local concentrations and effects. Acts as a regulator of osteoblast differentiation and bone growth by binding to its ligand osteocrin, thereby preventing binding between NPR3/NPR-C and natriuretic peptides, leading to increase cGMP production. The protein is Atrial natriuretic peptide receptor 3 (Npr3) of Rattus norvegicus (Rat).